Reading from the N-terminus, the 175-residue chain is MQVHVGRIGKPHGIRGEVTVEVLTDTPQERFSAGAVFSTEPTSAGPLTVETARWNKDILLLGFEEVNDRNRAETLRGTRLIFETDSVASDESESDSWYEHELIGLEARVGDQTVGKVSALNPMPAQDLLVITTAAGEEVLVPFVAEIVPEVDIAAGFIRLVPPGGLFDINRKDAE.

Positions serine 94–leucine 166 constitute a PRC barrel domain.

This sequence belongs to the RimM family. Binds ribosomal protein uS19.

The protein localises to the cytoplasm. In terms of biological role, an accessory protein needed during the final step in the assembly of 30S ribosomal subunit, possibly for assembly of the head region. Essential for efficient processing of 16S rRNA. May be needed both before and after RbfA during the maturation of 16S rRNA. It has affinity for free ribosomal 30S subunits but not for 70S ribosomes. This is Ribosome maturation factor RimM from Renibacterium salmoninarum (strain ATCC 33209 / DSM 20767 / JCM 11484 / NBRC 15589 / NCIMB 2235).